Consider the following 127-residue polypeptide: Large-conductance mechanosensitive channel (127 aa).

3 helical membrane-spanning segments follow: residues 19-39, 42-62, and 67-87; these read VGVI…TNII, LLGI…VGSA, and GAFI…FLLI.

Belongs to the MscL family. Homopentamer.

It is found in the cell membrane. Channel that opens in response to stretch forces in the membrane lipid bilayer. May participate in the regulation of osmotic pressure changes within the cell. The protein is Large-conductance mechanosensitive channel of Levilactobacillus brevis (strain ATCC 367 / BCRC 12310 / CIP 105137 / JCM 1170 / LMG 11437 / NCIMB 947 / NCTC 947) (Lactobacillus brevis).